We begin with the raw amino-acid sequence, 578 residues long: Proline--tRNA ligase (578 aa).

Belongs to the class-II aminoacyl-tRNA synthetase family. ProS type 1 subfamily. In terms of assembly, homodimer.

It localises to the cytoplasm. The enzyme catalyses tRNA(Pro) + L-proline + ATP = L-prolyl-tRNA(Pro) + AMP + diphosphate. Its function is as follows. Catalyzes the attachment of proline to tRNA(Pro) in a two-step reaction: proline is first activated by ATP to form Pro-AMP and then transferred to the acceptor end of tRNA(Pro). As ProRS can inadvertently accommodate and process non-cognate amino acids such as alanine and cysteine, to avoid such errors it has two additional distinct editing activities against alanine. One activity is designated as 'pretransfer' editing and involves the tRNA(Pro)-independent hydrolysis of activated Ala-AMP. The other activity is designated 'posttransfer' editing and involves deacylation of mischarged Ala-tRNA(Pro). The misacylated Cys-tRNA(Pro) is not edited by ProRS. In Burkholderia mallei (strain ATCC 23344), this protein is Proline--tRNA ligase.